A 151-amino-acid chain; its full sequence is Methylated-DNA--protein-cysteine methyltransferase (151 aa).

The active-site Nucleophile; methyl group acceptor is the Cys119.

It belongs to the MGMT family.

The protein resides in the cytoplasm. It carries out the reaction a 6-O-methyl-2'-deoxyguanosine in DNA + L-cysteinyl-[protein] = S-methyl-L-cysteinyl-[protein] + a 2'-deoxyguanosine in DNA. It catalyses the reaction a 4-O-methyl-thymidine in DNA + L-cysteinyl-[protein] = a thymidine in DNA + S-methyl-L-cysteinyl-[protein]. Its function is as follows. Involved in the cellular defense against the biological effects of O6-methylguanine (O6-MeG) and O4-methylthymine (O4-MeT) in DNA. Repairs the methylated nucleobase in DNA by stoichiometrically transferring the methyl group to a cysteine residue in the enzyme. This is a suicide reaction: the enzyme is irreversibly inactivated. This is Methylated-DNA--protein-cysteine methyltransferase from Saccharolobus islandicus (strain Y.N.15.51 / Yellowstone #2) (Sulfolobus islandicus).